Here is a 406-residue protein sequence, read N- to C-terminus: Succinylornithine transaminase (406 aa).

Lys-252 carries the post-translational modification N6-(pyridoxal phosphate)lysine.

This sequence belongs to the class-III pyridoxal-phosphate-dependent aminotransferase family. AstC subfamily. Pyridoxal 5'-phosphate is required as a cofactor.

The catalysed reaction is N(2)-succinyl-L-ornithine + 2-oxoglutarate = N-succinyl-L-glutamate 5-semialdehyde + L-glutamate. Its pathway is amino-acid degradation; L-arginine degradation via AST pathway; L-glutamate and succinate from L-arginine: step 3/5. Catalyzes the transamination of N(2)-succinylornithine and alpha-ketoglutarate into N(2)-succinylglutamate semialdehyde and glutamate. Can also act as an acetylornithine aminotransferase. In Escherichia coli O45:K1 (strain S88 / ExPEC), this protein is Succinylornithine transaminase.